Consider the following 350-residue polypeptide: GTPase Obg (350 aa).

The Obg domain occupies 1-159; that stretch reads MKLVDEAEIE…RTLKLELKLL (159 aa). The disordered stretch occupies residues 126-147; that stretch reads GNMHFKSSTNRSPRQALPGEPG. An OBG-type G domain is found at 160–337; that stretch reads ADVGLLGFPN…IMSRIMAFFD (178 aa). GTP-binding positions include 166–173, 191–195, 213–216, 287–290, and 318–320; these read GFPNAGKS, FTTLY, DIPG, NKAD, and SAL. The Mg(2+) site is built by S173 and T193.

The protein belongs to the TRAFAC class OBG-HflX-like GTPase superfamily. OBG GTPase family. Monomer. Mg(2+) is required as a cofactor.

Its subcellular location is the cytoplasm. Its function is as follows. An essential GTPase which binds GTP, GDP and possibly (p)ppGpp with moderate affinity, with high nucleotide exchange rates and a fairly low GTP hydrolysis rate. Plays a role in control of the cell cycle, stress response, ribosome biogenesis and in those bacteria that undergo differentiation, in morphogenesis control. The chain is GTPase Obg from Stenotrophomonas maltophilia (strain K279a).